The primary structure comprises 463 residues: Probable glucan endo-1,3-beta-glucosidase eglC (463 aa).

A signal peptide spans 1 to 18 (MQLTHLLAFALSLATSEA). Asn84 carries N-linked (GlcNAc...) asparagine glycosylation. The active-site Proton donor is Glu128. A glycan (N-linked (GlcNAc...) asparagine) is linked at Asn183. Glu239 acts as the Nucleophile in catalysis. A glycan (N-linked (GlcNAc...) asparagine) is linked at Asn312. Disordered regions lie at residues 317–354 (SASA…SSAV) and 396–430 (SGSS…NSGA). The GPI-anchor amidated glycine moiety is linked to residue Gly440. The propeptide at 441 to 463 (GASSVSGSVFGALVAVFAFVATL) is removed in mature form.

This sequence belongs to the glycosyl hydrolase 17 family. The GPI-anchor is attached to the protein in the endoplasmic reticulum and serves to target the protein to the cell surface. There, the glucosamine-inositol phospholipid moiety is cleaved off and the GPI-modified mannoprotein is covalently attached via its lipidless GPI glycan remnant to the 1,6-beta-glucan of the outer cell wall layer.

The protein resides in the cell membrane. It localises to the secreted. The protein localises to the cell wall. It catalyses the reaction Hydrolysis of (1-&gt;3)-beta-D-glucosidic linkages in (1-&gt;3)-beta-D-glucans.. Glucanases play a role in cell expansion during growth, in cell-cell fusion during mating, and in spore release during sporulation. This enzyme may be involved in beta-glucan degradation and also function biosynthetically as a transglycosylase. The chain is Probable glucan endo-1,3-beta-glucosidase eglC (eglC) from Aspergillus oryzae (strain ATCC 42149 / RIB 40) (Yellow koji mold).